The chain runs to 460 residues: Bifunctional protein GlmU (460 aa).

The tract at residues Met1 to Arg235 is pyrophosphorylase. UDP-N-acetyl-alpha-D-glucosamine-binding positions include Leu9–Gly12, Lys23, Gln76, and Gly81–Thr82. A Mg(2+)-binding site is contributed by Asp109. The UDP-N-acetyl-alpha-D-glucosamine site is built by Gly146, Glu161, Asn176, and Asn233. Position 233 (Asn233) interacts with Mg(2+). The segment at Val236–Asp256 is linker. The interval Gly257 to Arg460 is N-acetyltransferase. UDP-N-acetyl-alpha-D-glucosamine contacts are provided by Arg338 and Lys356. The Proton acceptor role is filled by His368. 2 residues coordinate UDP-N-acetyl-alpha-D-glucosamine: Tyr371 and Asn382. Acetyl-CoA-binding positions include Asn391 to Tyr392 and Ala428.

In the N-terminal section; belongs to the N-acetylglucosamine-1-phosphate uridyltransferase family. This sequence in the C-terminal section; belongs to the transferase hexapeptide repeat family. Homotrimer. It depends on Mg(2+) as a cofactor.

It localises to the cytoplasm. The enzyme catalyses alpha-D-glucosamine 1-phosphate + acetyl-CoA = N-acetyl-alpha-D-glucosamine 1-phosphate + CoA + H(+). It carries out the reaction N-acetyl-alpha-D-glucosamine 1-phosphate + UTP + H(+) = UDP-N-acetyl-alpha-D-glucosamine + diphosphate. It functions in the pathway nucleotide-sugar biosynthesis; UDP-N-acetyl-alpha-D-glucosamine biosynthesis; N-acetyl-alpha-D-glucosamine 1-phosphate from alpha-D-glucosamine 6-phosphate (route II): step 2/2. It participates in nucleotide-sugar biosynthesis; UDP-N-acetyl-alpha-D-glucosamine biosynthesis; UDP-N-acetyl-alpha-D-glucosamine from N-acetyl-alpha-D-glucosamine 1-phosphate: step 1/1. Its pathway is bacterial outer membrane biogenesis; LPS lipid A biosynthesis. Functionally, catalyzes the last two sequential reactions in the de novo biosynthetic pathway for UDP-N-acetylglucosamine (UDP-GlcNAc). The C-terminal domain catalyzes the transfer of acetyl group from acetyl coenzyme A to glucosamine-1-phosphate (GlcN-1-P) to produce N-acetylglucosamine-1-phosphate (GlcNAc-1-P), which is converted into UDP-GlcNAc by the transfer of uridine 5-monophosphate (from uridine 5-triphosphate), a reaction catalyzed by the N-terminal domain. The protein is Bifunctional protein GlmU of Bifidobacterium longum (strain NCC 2705).